The chain runs to 325 residues: NADH-quinone oxidoreductase subunit H (325 aa).

8 helical membrane passes run 11–31, 81–101, 114–134, 149–169, 186–206, 237–257, 265–285, and 304–324; these read ILISIVKAVVILLVVVTCGAF, VIFTLAPMIAFTSLLLAFAIV, IGILFFLMMAGLAVYAVLFAG, ASAQTLSYEVFIGLSLMGVVA, MWNVIPQFFGFITFAIAGVAV, FFVGEYIGIVTVSALIVTLFF, LPPFVWFALKTAFFMMMFILI, and VCLPLTLLNLLATAAVILYNA.

It belongs to the complex I subunit 1 family. In terms of assembly, NDH-1 is composed of 13 different subunits. Subunits NuoA, H, J, K, L, M, N constitute the membrane sector of the complex.

It is found in the cell inner membrane. The catalysed reaction is a quinone + NADH + 5 H(+)(in) = a quinol + NAD(+) + 4 H(+)(out). Its function is as follows. NDH-1 shuttles electrons from NADH, via FMN and iron-sulfur (Fe-S) centers, to quinones in the respiratory chain. The immediate electron acceptor for the enzyme in this species is believed to be ubiquinone. Couples the redox reaction to proton translocation (for every two electrons transferred, four hydrogen ions are translocated across the cytoplasmic membrane), and thus conserves the redox energy in a proton gradient. This subunit may bind ubiquinone. This Serratia proteamaculans (strain 568) protein is NADH-quinone oxidoreductase subunit H.